A 244-amino-acid chain; its full sequence is Ferric aerobactin reductase IutB (244 aa).

Residues Cys-220, Cys-221, Cys-232, and Cys-235 each coordinate [2Fe-2S] cluster.

As to quaternary structure, monomer. Requires [2Fe-2S] cluster as cofactor.

It localises to the cytoplasm. The catalysed reaction is 2 a Fe(II)-siderophore + NAD(+) + H(+) = 2 a Fe(III)-siderophore + NADH. It catalyses the reaction 2 a Fe(II)-siderophore + NADP(+) + H(+) = 2 a Fe(III)-siderophore + NADPH. Its function is as follows. Ferric-siderophore reductase involved in iron removal from the siderophores after their transport into the cell. Acts as a major ferric-aerobactin reductase catalyzing the reduction of Fe(3+)-aerobactin, a citrate-hydroxamate siderophore produced by other bacteria. Catalyzes reduction of Fe(3+)-vulnibactin, a catecholate siderophore synthesized by V.vulnificus, in the absence of VuuB. Catalyzes reduction of ferrioxamine B and Fe(3+)-vibriobactin in vitro. No activity with Fe(3+)-enterobactin. Catalyzes reduction of ferric chelating compound Fe(3+)-nitrilotriacetic acid (NTA) in the presence of NADH, NADPH or reduced glutathione (GSH) as its electron donor in vitro. Also catalyzes reduction of ferric chelating compounds Fe(3+)-citrate and Fe(3+)-EDTA as well as non-complexed FeCl3 in the presence of GSH as its electron donor in vitro. Highest activity with Fe(3+)-NTA as electron acceptor and GSH as donor. The sequence is that of Ferric aerobactin reductase IutB from Vibrio vulnificus.